Here is a 469-residue protein sequence, read N- to C-terminus: Tetratricopeptide repeat protein 38 (469 aa).

TPR repeat units lie at residues 107–140 (REKL…HPTD), 179–212 (SYVK…ERTD), and 251–284 (CHVY…QCFA).

This sequence belongs to the TTC38 family.

This Xenopus laevis (African clawed frog) protein is Tetratricopeptide repeat protein 38 (ttc38).